Consider the following 154-residue polypeptide: Transcriptional repressor NrdR (154 aa).

A zinc finger lies at 3 to 34 (CPFCGNVDTQVKDSRPAEDNVAIRRRRFCPAC). Positions 49 to 139 (LVVVKSSGRR…VYKNFQAADD (91 aa)) constitute an ATP-cone domain.

The protein belongs to the NrdR family. Zn(2+) is required as a cofactor.

In terms of biological role, negatively regulates transcription of bacterial ribonucleotide reductase nrd genes and operons by binding to NrdR-boxes. The chain is Transcriptional repressor NrdR from Paracoccus denitrificans (strain Pd 1222).